Consider the following 147-residue polypeptide: Peptide methionine sulfoxide reductase MsrA (147 aa).

Cysteine 10 is an active-site residue.

It belongs to the MsrA Met sulfoxide reductase family.

It carries out the reaction L-methionyl-[protein] + [thioredoxin]-disulfide + H2O = L-methionyl-(S)-S-oxide-[protein] + [thioredoxin]-dithiol. The enzyme catalyses [thioredoxin]-disulfide + L-methionine + H2O = L-methionine (S)-S-oxide + [thioredoxin]-dithiol. Its function is as follows. Has an important function as a repair enzyme for proteins that have been inactivated by oxidation. Catalyzes the reversible oxidation-reduction of methionine sulfoxide in proteins to methionine. The protein is Peptide methionine sulfoxide reductase MsrA of Pelagibacter ubique (strain HTCC1062).